Consider the following 773-residue polypeptide: Lon protease homolog 2, peroxisomal (773 aa).

The region spanning 9–198 is the Lon N-terminal domain; sequence LPVILVTSGV…MCIKWMNEKK (190 aa). 336 to 343 contributes to the ATP binding site; the sequence is GPPGIGKT. The region spanning 587-766 is the Lon proteolytic domain; sequence PLPAGVCFGL…EDVIGAMMDK (180 aa). Catalysis depends on residues serine 672 and lysine 715. The Microbody targeting signal motif lies at 771-773; it reads AKL.

Belongs to the peptidase S16 family.

It is found in the peroxisome matrix. It catalyses the reaction Hydrolysis of proteins in presence of ATP.. ATP-dependent serine protease that mediates the selective degradation of misfolded and unassembled polypeptides in the peroxisomal matrix. Necessary for type 2 peroxisome targeting signal (PTS2)-containing protein processing and facilitates peroxisome matrix protein import. The chain is Lon protease homolog 2, peroxisomal from Caenorhabditis elegans.